A 79-amino-acid polypeptide reads, in one-letter code: Translational regulator CsrA (79 aa).

Belongs to the CsrA/RsmA family. As to quaternary structure, homodimer; the beta-strands of each monomer intercalate to form a hydrophobic core, while the alpha-helices form wings that extend away from the core.

The protein localises to the cytoplasm. A translational regulator that binds mRNA to regulate translation initiation and/or mRNA stability. Usually binds in the 5'-UTR at or near the Shine-Dalgarno sequence preventing ribosome-binding, thus repressing translation. Its main target seems to be the major flagellin gene, while its function is anatagonized by FliW. This Shouchella clausii (strain KSM-K16) (Alkalihalobacillus clausii) protein is Translational regulator CsrA.